The primary structure comprises 124 residues: MHIIKTLISVGVAFSLSACLSLEGVEIAGLEGKSSGTLTKYRCENGYKASIKQRDNGVVSIAFNDGKDSYVSYLNHVPSASGTLYVNDKNTLKWHQKNNIAVFTYPDRNYAKTGQLVTTNCHKY.

The N-terminal stretch at 1–18 (MHIIKTLISVGVAFSLSA) is a signal peptide. C19 is lipidated: N-palmitoyl cysteine. C19 carries S-diacylglycerol cysteine lipidation.

The protein resides in the cell membrane. This is an uncharacterized protein from Pasteurella multocida (strain Pm70).